Consider the following 338-residue polypeptide: Aspartate carbamoyltransferase catalytic subunit (338 aa).

Carbamoyl phosphate-binding residues include Arg-59 and Thr-60. An L-aspartate-binding site is contributed by Lys-87. Carbamoyl phosphate-binding residues include Arg-109, His-142, and Gln-145. Residues Arg-182 and Arg-253 each contribute to the L-aspartate site. Carbamoyl phosphate contacts are provided by Gly-294 and Pro-295.

This sequence belongs to the aspartate/ornithine carbamoyltransferase superfamily. ATCase family. In terms of assembly, heterododecamer (2C3:3R2) of six catalytic PyrB chains organized as two trimers (C3), and six regulatory PyrI chains organized as three dimers (R2).

The catalysed reaction is carbamoyl phosphate + L-aspartate = N-carbamoyl-L-aspartate + phosphate + H(+). It functions in the pathway pyrimidine metabolism; UMP biosynthesis via de novo pathway; (S)-dihydroorotate from bicarbonate: step 2/3. In terms of biological role, catalyzes the condensation of carbamoyl phosphate and aspartate to form carbamoyl aspartate and inorganic phosphate, the committed step in the de novo pyrimidine nucleotide biosynthesis pathway. This is Aspartate carbamoyltransferase catalytic subunit from Prochlorococcus marinus subsp. pastoris (strain CCMP1986 / NIES-2087 / MED4).